A 349-amino-acid chain; its full sequence is Protein arginine N-methyltransferase 6 (349 aa).

The SAM-dependent MTase PRMT-type domain maps to 17-324 (DYMYFDSYSD…EENSRHICIR (308 aa)). Residues His30, Arg39, Gly63, Glu85, and Glu114 each coordinate S-adenosyl-L-methionine. Active-site residues include Glu128 and Glu137.

Belongs to the class I-like SAM-binding methyltransferase superfamily. Protein arginine N-methyltransferase family. PRMT6 subfamily.

Its subcellular location is the nucleus. The catalysed reaction is L-arginyl-[protein] + 2 S-adenosyl-L-methionine = N(omega),N(omega)-dimethyl-L-arginyl-[protein] + 2 S-adenosyl-L-homocysteine + 2 H(+). Arginine methyltransferase that can catalyze the formation of both omega-N monomethylarginine (MMA) and asymmetrical dimethylarginine (aDMA), with a strong preference for the formation of aDMA. Preferentially methylates arginyl residues present in a glycine and arginine-rich domain and displays preference for monomethylated substrates. Specifically mediates the asymmetric dimethylation of histone H3 'Arg-2' to form H3R2me2a. H3R2me2a represents a specific tag for epigenetic transcriptional repression and is mutually exclusive with methylation on histone H3 'Lys-4' (H3K4me2 and H3K4me3). Acts as a transcriptional repressor of various genes such as HOXA2, THBS1 and TP53. Repression of TP53 blocks cellular senescence. Also methylates histone H2A and H4 'Arg-3' (H2AR3me and H4R3me, respectively). Acts as a regulator of DNA base excision during DNA repair by mediating the methylation of DNA polymerase beta (POLB), leading to the stimulation of its polymerase activity by enhancing DNA binding and processivity. Methylates HMGA1. Regulates alternative splicing events. Acts as a transcriptional coactivator of a number of steroid hormone receptors including ESR1, ESR2, PGR and NR3C1. This chain is Protein arginine N-methyltransferase 6 (prmt6), found in Danio rerio (Zebrafish).